A 174-amino-acid chain; its full sequence is Co-chaperone protein HscB homolog (174 aa).

The J domain occupies 2 to 74 (NYFELFKFSP…IRRAEHMLSL (73 aa)).

It belongs to the HscB family. As to quaternary structure, interacts with HscA and stimulates its ATPase activity.

Its function is as follows. Co-chaperone involved in the maturation of iron-sulfur cluster-containing proteins. Seems to help targeting proteins to be folded toward HscA. The sequence is that of Co-chaperone protein HscB homolog from Shewanella baltica (strain OS223).